We begin with the raw amino-acid sequence, 537 residues long: Multidrug resistance protein Stp (537 aa).

14 helical membrane passes run 6-26 (LLTL…ALIV), 46-66 (WVVA…ATLA), 77-97 (IGVS…SIAV), 104-124 (AQGL…SAAF), 136-156 (IWTA…GLLV), 163-183 (SIFY…LCYV), 200-220 (LLFI…PQIG), 223-243 (SVQT…FVWL), 262-282 (YALA…MLLL), 300-320 (LMIL…GHLV), 327-347 (VPIL…IFSE), 352-372 (ALVL…LTPI), 397-417 (AIGS…WLSA), and 478-498 (VALL…WRWF).

Belongs to the major facilitator superfamily. EmrB family.

The protein resides in the cell membrane. The chain is Multidrug resistance protein Stp (stp) from Mycobacterium tuberculosis (strain CDC 1551 / Oshkosh).